The primary structure comprises 217 residues: Growth hormone variant (217 aa).

Residues 1–26 (MAAGSWTCLILAIALLCLPWLQEGSA) form the signal peptide. Cystine bridges form between Cys-79–Cys-191 and Cys-208–Cys-215. A phosphoserine mark is found at Ser-132 and Ser-176.

The protein belongs to the somatotropin/prolactin family. As to expression, expressed in the placenta.

Its subcellular location is the secreted. In terms of biological role, plays an important role in growth control. Its major role in stimulating body growth is to stimulate the liver and other tissues to secrete IGF1. It stimulates both the differentiation and proliferation of myoblasts. It also stimulates amino acid uptake and protein synthesis in muscle and other tissues. The sequence is that of Growth hormone variant (GH2) from Macaca mulatta (Rhesus macaque).